Here is a 346-residue protein sequence, read N- to C-terminus: Methylthioribose-1-phosphate isomerase (346 aa).

Residues 54–56 (RGA), Arg-91, and Gln-192 each bind substrate. The active-site Proton donor is the Asp-233. 243–244 (NK) serves as a coordination point for substrate.

It belongs to the eIF-2B alpha/beta/delta subunits family. MtnA subfamily.

The enzyme catalyses 5-(methylsulfanyl)-alpha-D-ribose 1-phosphate = 5-(methylsulfanyl)-D-ribulose 1-phosphate. It participates in amino-acid biosynthesis; L-methionine biosynthesis via salvage pathway; L-methionine from S-methyl-5-thio-alpha-D-ribose 1-phosphate: step 1/6. In terms of biological role, catalyzes the interconversion of methylthioribose-1-phosphate (MTR-1-P) into methylthioribulose-1-phosphate (MTRu-1-P). This is Methylthioribose-1-phosphate isomerase from Yersinia enterocolitica serotype O:8 / biotype 1B (strain NCTC 13174 / 8081).